We begin with the raw amino-acid sequence, 243 residues long: Carboxy-S-adenosyl-L-methionine synthase (243 aa).

Residues tyrosine 40, 65-67 (GCS), 90-91 (DN), 118-119 (DI), asparagine 133, and arginine 200 each bind S-adenosyl-L-methionine.

The protein belongs to the class I-like SAM-binding methyltransferase superfamily. Cx-SAM synthase family. In terms of assembly, homodimer.

It carries out the reaction prephenate + S-adenosyl-L-methionine = carboxy-S-adenosyl-L-methionine + 3-phenylpyruvate + H2O. In terms of biological role, catalyzes the conversion of S-adenosyl-L-methionine (SAM) to carboxy-S-adenosyl-L-methionine (Cx-SAM). The polypeptide is Carboxy-S-adenosyl-L-methionine synthase (Shewanella baltica (strain OS155 / ATCC BAA-1091)).